A 322-amino-acid polypeptide reads, in one-letter code: Homoserine kinase (322 aa).

ATP is bound at residue 107–117; it reads PLSSGMGGSAA.

The protein belongs to the GHMP kinase family. Homoserine kinase subfamily.

The protein localises to the cytoplasm. It catalyses the reaction L-homoserine + ATP = O-phospho-L-homoserine + ADP + H(+). It participates in amino-acid biosynthesis; L-threonine biosynthesis; L-threonine from L-aspartate: step 4/5. Catalyzes the ATP-dependent phosphorylation of L-homoserine to L-homoserine phosphate. In Xylella fastidiosa (strain 9a5c), this protein is Homoserine kinase.